The chain runs to 263 residues: Palmitoyltransferase ZDHHC22 (263 aa).

Topologically, residues 1-9 (MLALRLLNV) are cytoplasmic. The chain crosses the membrane as a helical span at residues 10–30 (VAPAYFLCISLVTFVLQLFLF). Residues 31–48 (LPSMREDPAAARLFSPAL) lie on the Lumenal side of the membrane. Residues 49-69 (LHGALFLFLSANALGNYVLVI) form a helical membrane-spanning segment. Residues 70–125 (QNSPDDLGACQGASARKTPCPSPSTHFCRVCARVTLRHDHHCFFTGNCIGSRNMRN) are Cytoplasmic-facing. One can recognise a DHHC domain in the interval 92-131 (PSTHFCRVCARVTLRHDHHCFFTGNCIGSRNMRNFVLFCL). Cysteine 111 functions as the S-palmitoyl cysteine intermediate in the catalytic mechanism. 2 helical membrane-spanning segments follow: residues 126–146 (FVLF…AGVA) and 147–167 (YISA…TLLP). The Cytoplasmic segment spans residues 168-182 (TSISQFFSGAVLGSE). Residues 183 to 203 (MFVILMLYLWFAIGLACAGFC) traverse the membrane as a helical segment. At 204–263 (CHQLLLILRGQTRHQVRKGVAVRARPWRKNLQEVFGKRWLLGLLVPMFNVGSESSKQQDK) the chain is on the lumenal side.

Belongs to the DHHC palmitoyltransferase family. As to quaternary structure, interacts with CNN3. As to expression, widely expressed.

The protein localises to the endoplasmic reticulum membrane. It localises to the golgi apparatus membrane. The catalysed reaction is L-cysteinyl-[protein] + hexadecanoyl-CoA = S-hexadecanoyl-L-cysteinyl-[protein] + CoA. Its function is as follows. Palmitoyltransferase that could catalyze the addition of palmitate onto various protein substrates and be involved in a variety of cellular processes. Catalyzes the palmitoylation of KCNMA1, regulating localization of KCNMA1 to the plasma membrane. Might also mediate palmitoylation of CNN3. The polypeptide is Palmitoyltransferase ZDHHC22 (Homo sapiens (Human)).